The chain runs to 140 residues: Small ribosomal subunit protein bS6 (140 aa).

Positions 111–140 (EHFTGPAGAEGSDDESTESTDEAVAETADA) are disordered. The segment covering 121 to 140 (GSDDESTESTDEAVAETADA) has biased composition (acidic residues).

Belongs to the bacterial ribosomal protein bS6 family.

In terms of biological role, binds together with bS18 to 16S ribosomal RNA. This is Small ribosomal subunit protein bS6 from Rhodopirellula baltica (strain DSM 10527 / NCIMB 13988 / SH1).